The chain runs to 266 residues: Hydroxyethylthiazole kinase (266 aa).

Residue methionine 41 participates in substrate binding. The ATP site is built by arginine 117 and serine 163. Alanine 190 is a substrate binding site.

This sequence belongs to the Thz kinase family. It depends on Mg(2+) as a cofactor.

The catalysed reaction is 5-(2-hydroxyethyl)-4-methylthiazole + ATP = 4-methyl-5-(2-phosphooxyethyl)-thiazole + ADP + H(+). Its pathway is cofactor biosynthesis; thiamine diphosphate biosynthesis; 4-methyl-5-(2-phosphoethyl)-thiazole from 5-(2-hydroxyethyl)-4-methylthiazole: step 1/1. Catalyzes the phosphorylation of the hydroxyl group of 4-methyl-5-beta-hydroxyethylthiazole (THZ). This Histophilus somni (strain 129Pt) (Haemophilus somnus) protein is Hydroxyethylthiazole kinase.